The chain runs to 1616 residues: Replicase large subunit (1616 aa).

Residues Phe50–Asp466 form a methyltransferase region. The 210-residue stretch at Thr72–Val281 folds into the Alphavirus-like MT domain. Residues Met800–Arg962 enclose the (+)RNA virus helicase ATP-binding domain. The segment at Thr828–Thr1084 is helicase. An ATP-binding site is contributed by Gly832 to Thr839. In terms of domain architecture, (+)RNA virus helicase C-terminal spans Arg963 to Ala1115. In terms of domain architecture, RdRp catalytic spans Met1385–Asn1498.

This sequence belongs to the ssRNA positive-strand viruses RNA-directed RNA polymerase family. As to quaternary structure, heterodimer of a large and a small subunit.

It catalyses the reaction RNA(n) + a ribonucleoside 5'-triphosphate = RNA(n+1) + diphosphate. The enzyme catalyses ATP + H2O = ADP + phosphate + H(+). Is an RNA-dependent RNA polymerase active in viral RNA replication. In terms of biological role, is a methyltransferase active in RNA capping and an RNA helicase. Methyltransferase displays a cytoplasmic capping enzyme activity. This function is necessary since all viral RNAs are synthesized in the cytoplasm, and host capping enzymes are restricted to the nucleus. Helicase region probably exhibits NTPase and RNA unwinding activities (Potential). It also acts as a suppressor of RNA-mediated gene silencing, also known as post-transcriptional gene silencing (PTGS), a mechanism of plant viral defense that limits the accumulation of viral RNAs. May mediate silencing suppression through either inhibition of HEN1-mediated siRNA or siRNA demethylation. This Tobamovirus Ob protein is Replicase large subunit.